The following is a 413-amino-acid chain: Branched-chain-amino-acid aminotransferase 3, chloroplastic (413 aa).

A chloroplast-targeting transit peptide spans 1–60 (MERAAILPSVNQNYLLCPSRAFSTRLHSSTRNLSPPSFASIKLQHSSSSVSSNGGISLTR). Position 259 is an N6-(pyridoxal phosphate)lysine (Lys259).

Belongs to the class-IV pyridoxal-phosphate-dependent aminotransferase family. It depends on pyridoxal 5'-phosphate as a cofactor. As to expression, expressed in the phloem cells.

The protein localises to the plastid. It is found in the chloroplast. The catalysed reaction is L-leucine + 2-oxoglutarate = 4-methyl-2-oxopentanoate + L-glutamate. It carries out the reaction L-isoleucine + 2-oxoglutarate = (S)-3-methyl-2-oxopentanoate + L-glutamate. The enzyme catalyses L-valine + 2-oxoglutarate = 3-methyl-2-oxobutanoate + L-glutamate. It catalyses the reaction a 2-oxocarboxylate + L-methionine = 4-methylsulfanyl-2-oxobutanoate + an L-alpha-amino acid. Its pathway is amino-acid biosynthesis; L-isoleucine biosynthesis; L-isoleucine from 2-oxobutanoate: step 4/4. It functions in the pathway amino-acid biosynthesis; L-leucine biosynthesis; L-leucine from 3-methyl-2-oxobutanoate: step 4/4. It participates in amino-acid biosynthesis; L-valine biosynthesis; L-valine from pyruvate: step 4/4. Inhibited by Ser- or Thr-derived imine. Its function is as follows. Converts 2-oxo acids to branched-chain amino acids. Acts on leucine, isoleucine and valine. Also involved in methionine chain elongation cycle of aliphatic glucosinolate formation. Catalyzes the conversion of 5-methylthiopentyl-2-oxo and 6-methylthiohexyl-2-oxo acids to their respective Met derivatives, homomethionine and dihomo-methionine, respectively. The polypeptide is Branched-chain-amino-acid aminotransferase 3, chloroplastic (Arabidopsis thaliana (Mouse-ear cress)).